The following is a 140-amino-acid chain: Endoribonuclease YbeY (140 aa).

Zn(2+) contacts are provided by His100, His104, and His110.

The protein belongs to the endoribonuclease YbeY family. It depends on Zn(2+) as a cofactor.

It localises to the cytoplasm. Single strand-specific metallo-endoribonuclease involved in late-stage 70S ribosome quality control and in maturation of the 3' terminus of the 16S rRNA. The polypeptide is Endoribonuclease YbeY (Helicobacter pylori (strain ATCC 700392 / 26695) (Campylobacter pylori)).